We begin with the raw amino-acid sequence, 555 residues long: Formate--tetrahydrofolate ligase (555 aa).

65-72 (TPAGEGKS) contributes to the ATP binding site.

The protein belongs to the formate--tetrahydrofolate ligase family.

It catalyses the reaction (6S)-5,6,7,8-tetrahydrofolate + formate + ATP = (6R)-10-formyltetrahydrofolate + ADP + phosphate. Its pathway is one-carbon metabolism; tetrahydrofolate interconversion. This chain is Formate--tetrahydrofolate ligase, found in Lactococcus lactis subsp. lactis (strain IL1403) (Streptococcus lactis).